A 495-amino-acid chain; its full sequence is Phenylalanine--tRNA ligase alpha subunit (495 aa).

Residues Thr-338, 377-379, and Tyr-417 contribute to the L-phenylalanine site; that span reads QLE. A Mg(2+)-binding site is contributed by Glu-419. Phe-442 is a binding site for L-phenylalanine.

This sequence belongs to the class-II aminoacyl-tRNA synthetase family. Phe-tRNA synthetase alpha subunit type 2 subfamily. As to quaternary structure, tetramer of two alpha and two beta subunits. It depends on Mg(2+) as a cofactor.

Its subcellular location is the cytoplasm. It catalyses the reaction tRNA(Phe) + L-phenylalanine + ATP = L-phenylalanyl-tRNA(Phe) + AMP + diphosphate + H(+). This Methanosarcina mazei (strain ATCC BAA-159 / DSM 3647 / Goe1 / Go1 / JCM 11833 / OCM 88) (Methanosarcina frisia) protein is Phenylalanine--tRNA ligase alpha subunit.